The chain runs to 488 residues: UDP-N-acetylmuramate--L-alanine ligase (488 aa).

ATP is bound at residue 129–135 (GSHGKTT).

The protein belongs to the MurCDEF family.

It is found in the cytoplasm. The enzyme catalyses UDP-N-acetyl-alpha-D-muramate + L-alanine + ATP = UDP-N-acetyl-alpha-D-muramoyl-L-alanine + ADP + phosphate + H(+). Its pathway is cell wall biogenesis; peptidoglycan biosynthesis. Cell wall formation. This is UDP-N-acetylmuramate--L-alanine ligase from Prochlorococcus marinus (strain MIT 9303).